Reading from the N-terminus, the 238-residue chain is MVHLRRTTSPYWWPIPRKAGGVWAVRPSPGPHSLAYSIPLALVIRDVLRYAKTLREARMIISRGYIKVDGVVRRNYKFPVGLMDVVEIVPTGEIYRVVPDERSYYALVPITSEEADLKLLRVEGKTAVKGGRLQVHFHDGRNLIMPAETARQIKTFDSVLYDLKARTVRSHIPMRLGVYAVVTHGGNVGFHGQLSEIVWTLKRRQSVVLLKRGEEAKRTILDYIMAVGAEAPVIKISP.

Positions 38 to 109 (IPLALVIRDV…DERSYYALVP (72 aa)) constitute an S4 RNA-binding domain.

Belongs to the eukaryotic ribosomal protein eS4 family.

This is Small ribosomal subunit protein eS4 from Pyrobaculum neutrophilum (strain DSM 2338 / JCM 9278 / NBRC 100436 / V24Sta) (Thermoproteus neutrophilus).